The chain runs to 72 residues: SRY-related protein MG44 (72 aa).

A DNA-binding region (HMG box) is located at residues 1 to 69; sequence VKRPMNAFMV…KHMADYPNYK (69 aa).

The protein localises to the nucleus. The protein is SRY-related protein MG44 of Tarentola mauritanica (Common wall gecko).